Reading from the N-terminus, the 138-residue chain is Basic phospholipase A2 homolog Ts-K49b (138 aa).

An N-terminal signal peptide occupies residues Met-1–Gly-16. Intrachain disulfides connect Cys-42–Cys-131, Cys-44–Cys-60, Cys-65–Cys-138, Cys-66–Cys-104, Cys-73–Cys-97, and Cys-91–Cys-102. Residues Lys-121–Lys-133 form an important for membrane-damaging activities in eukaryotes and bacteria; heparin-binding region.

In terms of tissue distribution, expressed by the venom gland.

The protein resides in the secreted. Functionally, snake venom phospholipase A2 homolog that lacks catalytic activity. It shows myotoxic and weak anticoagulant activities. A model of myotoxic mechanism has been proposed: an apo Lys49-PLA2 is activated by the entrance of a hydrophobic molecule (e.g. fatty acid) at the hydrophobic channel of the protein leading to a reorientation of a monomer. This reorientation causes a transition between 'inactive' to 'active' states, causing alignment of C-terminal and membrane-docking sites (MDoS) side-by-side and putting the membrane-disruption sites (MDiS) in the same plane, exposed to solvent and in a symmetric position for both monomers. The MDoS region stabilizes the toxin on membrane by the interaction of charged residues with phospholipid head groups. Subsequently, the MDiS region destabilizes the membrane with penetration of hydrophobic residues. This insertion causes a disorganization of the membrane, allowing an uncontrolled influx of ions (i.e. calcium and sodium), and eventually triggering irreversible intracellular alterations and cell death. This is Basic phospholipase A2 homolog Ts-K49b from Trimeresurus stejnegeri (Chinese green tree viper).